We begin with the raw amino-acid sequence, 137 residues long: MPEATGLMAHNWGFAIFLLGVVGLCAFMLGVSSLLGSKAWGRSKNEPFESGMLPTGGARLRLSAKFYLVAMLFVIFDIEALFLFAWSVSVRESGWTGFVEALVFIAILLAGLVYLFRVGALDWAPEARRKRQAKLKQ.

Transmembrane regions (helical) follow at residues 12–32, 66–86, and 96–116; these read WGFA…LGVS, FYLV…LFAW, and TGFV…VYLF.

This sequence belongs to the complex I subunit 3 family. As to quaternary structure, NDH-1 is composed of 13 different subunits. Subunits NuoA, H, J, K, L, M, N constitute the membrane sector of the complex.

It localises to the cell inner membrane. It catalyses the reaction a quinone + NADH + 5 H(+)(in) = a quinol + NAD(+) + 4 H(+)(out). Its function is as follows. NDH-1 shuttles electrons from NADH, via FMN and iron-sulfur (Fe-S) centers, to quinones in the respiratory chain. The immediate electron acceptor for the enzyme in this species is believed to be ubiquinone. Couples the redox reaction to proton translocation (for every two electrons transferred, four hydrogen ions are translocated across the cytoplasmic membrane), and thus conserves the redox energy in a proton gradient. The protein is NADH-quinone oxidoreductase subunit A of Pseudomonas fluorescens (strain Pf0-1).